We begin with the raw amino-acid sequence, 207 residues long: MIDQEESNFNFNFNQPQQPQQQQFHGKSVKKNKNKNNNNNSESGNKNGGENKNGVEKRFKTLPPAESLPRNETVGGYIFVCNNDTMQENLKRQLFGLPPRYRDSVRAITPGLPLFLYNYSTHQLHGVFEAASFGGTNIDPTAWEDKKNQGESRFPAQVRVMTRKICEPLEEDSFRPILHHYDGPKFRLELNIPEAISLLDIFEETKA.

The interval 1–68 (MIDQEESNFN…FKTLPPAESL (68 aa)) is disordered. Low complexity-rich tracts occupy residues 8-26 (NFNFNFNQPQQPQQQQFHG) and 35-52 (KNNNNNSESGNKNGGENK). A DCD domain is found at 72–204 (ETVGGYIFVC…AISLLDIFEE (133 aa)).

This is B2 protein from Daucus carota (Wild carrot).